We begin with the raw amino-acid sequence, 85 residues long: U4-theraphotoxin-Hhn1z (85 aa).

An N-terminal signal peptide occupies residues 1-22; it reads MKMTLIAILTCAAVLVLHTTAA. The propeptide occupies 23–48; it reads EELEAESQLMEVGMPDTELEAVDEER. Intrachain disulfides connect C52/C66, C56/C77, and C71/C82.

Belongs to the neurotoxin 12 (Hwtx-2) family. 02 (Hwtx-2) subfamily. As to expression, expressed by the venom gland.

The protein resides in the secreted. Its function is as follows. Postsynaptic neurotoxin. This is U4-theraphotoxin-Hhn1z from Cyriopagopus hainanus (Chinese bird spider).